A 317-amino-acid polypeptide reads, in one-letter code: Beta-ketoacyl-[acyl-carrier-protein] synthase III (317 aa).

Catalysis depends on residues Cys-112 and His-244. Residues 245 to 249 (QANVR) are ACP-binding. The active site involves Asn-274.

The protein belongs to the thiolase-like superfamily. FabH family. In terms of assembly, homodimer.

It localises to the cytoplasm. It carries out the reaction malonyl-[ACP] + acetyl-CoA + H(+) = 3-oxobutanoyl-[ACP] + CO2 + CoA. The protein operates within lipid metabolism; fatty acid biosynthesis. Its function is as follows. Catalyzes the condensation reaction of fatty acid synthesis by the addition to an acyl acceptor of two carbons from malonyl-ACP. Catalyzes the first condensation reaction which initiates fatty acid synthesis and may therefore play a role in governing the total rate of fatty acid production. Possesses both acetoacetyl-ACP synthase and acetyl transacylase activities. Its substrate specificity determines the biosynthesis of branched-chain and/or straight-chain of fatty acids. The polypeptide is Beta-ketoacyl-[acyl-carrier-protein] synthase III (Rickettsia canadensis (strain McKiel)).